Reading from the N-terminus, the 452-residue chain is MEKQYLTVTALTRYIKTKIEYDPHLQSVWLKGEISNFKNHSRGHMYFTLKDENARIAAVMFAGHNRNIKFRPENGMKVLVKGKISVYEASGSYQIYIQDMQPDGIGNLHLAYEQLKVRLEEEGLFSQVYKKTIPPYAKTIGVITSPTGAAIRDIITTIKRRYPIGNVIVFPVLVQGESAAPSIVQAIRTANEMEEIDVLIVGRGGGSIEELWAFNEEMVARAIFKSEIPIISAVGHETDFTIADFVADLRAPTPTAAAELAAPNIIELQEKVLQRTLRLQRAMRELVHKKEEKLQVLQKSYAFRYPRQVYEQKEEQLDRALEQLVLAKERYIDKKVNQLKQLSFYLEKHHPSQKIMQTKVAVETLQKQLQREMQTLLQAKEFAFVRAAQKLEALSPLKVMMRGYGLVYDEEKQVLKSVKDVSLGDAVSVQLQDGILDCSVSGIEERELNNGK.

It belongs to the XseA family. As to quaternary structure, heterooligomer composed of large and small subunits.

The protein localises to the cytoplasm. It catalyses the reaction Exonucleolytic cleavage in either 5'- to 3'- or 3'- to 5'-direction to yield nucleoside 5'-phosphates.. Its function is as follows. Bidirectionally degrades single-stranded DNA into large acid-insoluble oligonucleotides, which are then degraded further into small acid-soluble oligonucleotides. The sequence is that of Exodeoxyribonuclease 7 large subunit from Bacillus anthracis (strain A0248).